Reading from the N-terminus, the 617-residue chain is KIF-binding protein (617 aa).

Positions 48-83 (ALLGPAPEDEDEPAADDGPGDQALGAGEPREAEGPG) are disordered. Residues 54–66 (PEDEDEPAADDGP) show a composition bias toward acidic residues. The residue at position 174 (Ser-174) is a Phosphoserine.

It belongs to the KIF-binding protein family. In terms of assembly, interacts with KIF1B; positively regulates KIF1B microtubule motor activity. Interacts with STMN2. As to expression, in the embryo it is expressed in cortical neurons; expression increases during neuronal development.

It localises to the cytoplasm. The protein resides in the cytoskeleton. Activator of KIF1B plus-end-directed microtubule motor activity. Required for organization of axonal microtubules, and axonal outgrowth and maintenance during peripheral and central nervous system development. This chain is KIF-binding protein, found in Mus musculus (Mouse).